A 432-amino-acid polypeptide reads, in one-letter code: Gamma-glutamyl phosphate reductase (432 aa).

Belongs to the gamma-glutamyl phosphate reductase family.

Its subcellular location is the cytoplasm. It catalyses the reaction L-glutamate 5-semialdehyde + phosphate + NADP(+) = L-glutamyl 5-phosphate + NADPH + H(+). It participates in amino-acid biosynthesis; L-proline biosynthesis; L-glutamate 5-semialdehyde from L-glutamate: step 2/2. Catalyzes the NADPH-dependent reduction of L-glutamate 5-phosphate into L-glutamate 5-semialdehyde and phosphate. The product spontaneously undergoes cyclization to form 1-pyrroline-5-carboxylate. This is Gamma-glutamyl phosphate reductase from Methylobacterium radiotolerans (strain ATCC 27329 / DSM 1819 / JCM 2831 / NBRC 15690 / NCIMB 10815 / 0-1).